A 463-amino-acid polypeptide reads, in one-letter code: T-box transcription factor TBX1-B (463 aa).

2 disordered regions span residues 39-58 (SPSPGDPYSQHEPHYEPCSA) and 75-102 (GASSSSCASSTPGSGSTGSSSGNKAPVK). Over residues 75–96 (GASSSSCASSTPGSGSTGSSSG) the composition is skewed to low complexity. A DNA-binding region (T-box) is located at residues 119 to 297 (LWDEFNQLGT…SNPFAKGFRD (179 aa)). Disordered regions lie at residues 320–343 (RSRNPVSSPPQNGSDKDGDGRREY) and 367–406 (SPSLPVPGGLVPLSTGRPSPPHELRLDPHSQGSEPLHHHP). Residues 323-332 (NPVSSPPQNG) are compositionally biased toward polar residues. A compositionally biased stretch (basic and acidic residues) spans 333 to 343 (SDKDGDGRREY). Low complexity predominate over residues 367-380 (SPSLPVPGGLVPLS). The Nuclear localization signal motif lies at 420-431 (KTRPAPYPLPSI).

As to quaternary structure, binds DNA as a dimer. Interacts with dscr6/ripply3.

The protein localises to the nucleus. In terms of biological role, probable transcriptional regulator involved in developmental processes. Binds to the palindromic T site 5'-TTCACACCTAGGTGTGAA-3' DNA sequence. Induces pre-placodal ectoderm (PPE) gene expression in regions where RIPPLY3 is absent. Plays a role in the formation of the anteroposterior (AP) axis during embryonic development; required to establish the posterolateral border of the pre-placodal ectoderm (PPE) acting downstream of the retinoic acid receptor (RAR) signaling. Its function is as follows. Probable transcriptional regulator involved in developmental processes. Binds to the palindromic T site 5'-TTCACACCTAGGTGTGAA-3' DNA sequence. Is required for normal development of the pharyngeal arch arteries. The sequence is that of T-box transcription factor TBX1-B (tbx1-b) from Xenopus laevis (African clawed frog).